The sequence spans 361 residues: Phospho-N-acetylmuramoyl-pentapeptide-transferase (361 aa).

10 consecutive transmembrane segments (helical) span residues 26–46 (AILGILTALLISLVIGPVMIR), 73–93 (TMGGALILVAIAISTLLWADL), 97–117 (YVWVVLLVTLLFGAIGWVDDY), 134–154 (YFWQSVIGATAAIVLYVTASM), 168–188 (VSLTLGPVLFILLTYFVIVGS), 200–220 (GLAIMPTVMVAGALAIFAYLS), 237–257 (TGELIIFCGALVGAGLGFLWF), 264–284 (VFMGDVGALALGAALGTVAVI), 289–309 (IVLFIMGGVFVMETISVILQV), and 340–360 (IVRFWVVTVVLVLIGLASLKI).

This sequence belongs to the glycosyltransferase 4 family. MraY subfamily. The cofactor is Mg(2+).

The protein resides in the cell inner membrane. It carries out the reaction UDP-N-acetyl-alpha-D-muramoyl-L-alanyl-gamma-D-glutamyl-meso-2,6-diaminopimeloyl-D-alanyl-D-alanine + di-trans,octa-cis-undecaprenyl phosphate = di-trans,octa-cis-undecaprenyl diphospho-N-acetyl-alpha-D-muramoyl-L-alanyl-D-glutamyl-meso-2,6-diaminopimeloyl-D-alanyl-D-alanine + UMP. The protein operates within cell wall biogenesis; peptidoglycan biosynthesis. Catalyzes the initial step of the lipid cycle reactions in the biosynthesis of the cell wall peptidoglycan: transfers peptidoglycan precursor phospho-MurNAc-pentapeptide from UDP-MurNAc-pentapeptide onto the lipid carrier undecaprenyl phosphate, yielding undecaprenyl-pyrophosphoryl-MurNAc-pentapeptide, known as lipid I. The chain is Phospho-N-acetylmuramoyl-pentapeptide-transferase from Marinobacter nauticus (strain ATCC 700491 / DSM 11845 / VT8) (Marinobacter aquaeolei).